The following is a 149-amino-acid chain: Transcriptional regulator MraZ (149 aa).

2 SpoVT-AbrB domains span residues 7–54 (KYVN…GISH) and 83–126 (AVQL…QPQN).

This sequence belongs to the MraZ family. In terms of assembly, forms oligomers.

It localises to the cytoplasm. The protein localises to the nucleoid. In Rickettsia conorii (strain ATCC VR-613 / Malish 7), this protein is Transcriptional regulator MraZ.